The chain runs to 874 residues: Leucine--tRNA ligase (874 aa).

Residues 47–57 carry the 'HIGH' region motif; that stretch reads PYPSGKLHMGH. Positions 636 to 640 match the 'KMSKS' region motif; sequence KMSKS. Lys-639 contributes to the ATP binding site.

Belongs to the class-I aminoacyl-tRNA synthetase family.

The protein localises to the cytoplasm. It carries out the reaction tRNA(Leu) + L-leucine + ATP = L-leucyl-tRNA(Leu) + AMP + diphosphate. This chain is Leucine--tRNA ligase, found in Acinetobacter baumannii (strain AB0057).